Reading from the N-terminus, the 494-residue chain is Cytochrome P450 2A7 (494 aa).

A heme-binding site is contributed by cysteine 439.

This sequence belongs to the cytochrome P450 family. Heme serves as cofactor.

The protein localises to the endoplasmic reticulum membrane. The protein resides in the microsome membrane. It catalyses the reaction an organic molecule + reduced [NADPH--hemoprotein reductase] + O2 = an alcohol + oxidized [NADPH--hemoprotein reductase] + H2O + H(+). In terms of biological role, cytochromes P450 are a group of heme-thiolate monooxygenases. In liver microsomes, this enzyme is involved in an NADPH-dependent electron transport pathway. It oxidizes a variety of structurally unrelated compounds, including steroids, fatty acids, and xenobiotics. In Homo sapiens (Human), this protein is Cytochrome P450 2A7 (CYP2A7).